A 284-amino-acid polypeptide reads, in one-letter code: Protoheme IX farnesyltransferase (284 aa).

Helical transmembrane passes span 13 to 33, 35 to 55, 84 to 104, 106 to 126, 134 to 154, 163 to 183, 205 to 225, 229 to 249, and 264 to 284; these read VTVL…TGYP, LTVI…SFIL, FALL…TYFI, LLTA…YTIW, NIVI…AAMA, VMFL…AIFL, VNQI…FYFV, MGYL…GFAY, and FFFS…DSKI.

It belongs to the UbiA prenyltransferase family. Protoheme IX farnesyltransferase subfamily.

It localises to the cell inner membrane. The enzyme catalyses heme b + (2E,6E)-farnesyl diphosphate + H2O = Fe(II)-heme o + diphosphate. It participates in porphyrin-containing compound metabolism; heme O biosynthesis; heme O from protoheme: step 1/1. Converts heme B (protoheme IX) to heme O by substitution of the vinyl group on carbon 2 of heme B porphyrin ring with a hydroxyethyl farnesyl side group. The protein is Protoheme IX farnesyltransferase of Leptospira biflexa serovar Patoc (strain Patoc 1 / Ames).